The chain runs to 70 residues: DNA gyrase inhibitor YacG (70 aa).

Cysteine 21, cysteine 24, cysteine 36, and cysteine 40 together coordinate Zn(2+).

The protein belongs to the DNA gyrase inhibitor YacG family. In terms of assembly, interacts with GyrB. Zn(2+) serves as cofactor.

Inhibits all the catalytic activities of DNA gyrase by preventing its interaction with DNA. Acts by binding directly to the C-terminal domain of GyrB, which probably disrupts DNA binding by the gyrase. This Rhizobium meliloti (strain 1021) (Ensifer meliloti) protein is DNA gyrase inhibitor YacG.